We begin with the raw amino-acid sequence, 308 residues long: uncharacterized protein (308 aa).

Positions 212–242 form a coiled coil; it reads EADKMTIDYMRELDNLQRQYDGLVDEDKALH.

This is an uncharacterized protein from Ostreid herpesvirus 1 (isolate France) (OsHV-1).